Here is a 253-residue protein sequence, read N- to C-terminus: Demethylmenaquinone methyltransferase (253 aa).

Residues threonine 75, aspartate 96, and 124 to 125 contribute to the S-adenosyl-L-methionine site; that span reads DA.

This sequence belongs to the class I-like SAM-binding methyltransferase superfamily. MenG/UbiE family.

The enzyme catalyses a 2-demethylmenaquinol + S-adenosyl-L-methionine = a menaquinol + S-adenosyl-L-homocysteine + H(+). It participates in quinol/quinone metabolism; menaquinone biosynthesis; menaquinol from 1,4-dihydroxy-2-naphthoate: step 2/2. Functionally, methyltransferase required for the conversion of demethylmenaquinol (DMKH2) to menaquinol (MKH2). This chain is Demethylmenaquinone methyltransferase, found in Desulfitobacterium hafniense (strain Y51).